Reading from the N-terminus, the 129-residue chain is Lysozyme C (129 aa).

Residues 1-129 enclose the C-type lysozyme domain; it reads KVYGRCELAA…VNAWTRGCRL (129 aa). Cystine bridges form between cysteine 6–cysteine 127, cysteine 30–cysteine 115, cysteine 64–cysteine 80, and cysteine 76–cysteine 94. Catalysis depends on residues glutamate 35 and aspartate 52.

It belongs to the glycosyl hydrolase 22 family. Monomer.

The protein localises to the secreted. The catalysed reaction is Hydrolysis of (1-&gt;4)-beta-linkages between N-acetylmuramic acid and N-acetyl-D-glucosamine residues in a peptidoglycan and between N-acetyl-D-glucosamine residues in chitodextrins.. Its function is as follows. Lysozymes have primarily a bacteriolytic function; those in tissues and body fluids are associated with the monocyte-macrophage system and enhance the activity of immunoagents. This chain is Lysozyme C (LYZ), found in Syrmaticus soemmerringii (Copper pheasant).